The primary structure comprises 444 residues: Protein cereblon (444 aa).

Residues 1–52 (MAGEGDPEDAAHNMGNHLPLLPAEEEEEDEIEMEVEDQDNKEPKKPNIINFD) form a disordered region. Over residues 23-37 (AEEEEEDEIEMEVED) the composition is skewed to acidic residues. The 242-residue stretch at 80–321 (CPVIPVLPQV…CELDIMNKCT (242 aa)) folds into the Lon N-terminal domain. Residues 320–428 (CTSLCCKQCQ…LTRSALLPTI (109 aa)) enclose the CULT domain. 2 residues coordinate Zn(2+): Cys-325 and Cys-328. 3 residues coordinate (S)-thalidomide: His-380, Trp-382, and Trp-388. Positions 393 and 396 each coordinate Zn(2+).

It belongs to the CRBN family. In terms of assembly, component of a DCX (DDB1-CUL4-X-box) protein ligase complex, at least composed of CRBN, CUL4A, DDB1 and RBX1. Interacts directly with DDB1. Interacts with KCNT1. Interacts with ILF2. Interacts with TRAF6 and ECSIT. In terms of processing, ubiquitinated, ubiquitination is mediated by its own DCX protein ligase complex.

It localises to the cytoplasm. The protein resides in the nucleus. It is found in the membrane. It participates in protein modification; protein ubiquitination. Substrate recognition component of a DCX (DDB1-CUL4-X-box) E3 protein ligase complex that mediates the ubiquitination and subsequent proteasomal degradation of target proteins, such as MEIS2, ILF2 or GLUL. Normal degradation of key regulatory proteins is required for normal limb outgrowth and expression of the fibroblast growth factor FGF8. Maintains presynaptic glutamate release and consequently cognitive functions, such as memory and learning, by negatively regulating large-conductance calcium-activated potassium (BK) channels in excitatory neurons. Likely to function by regulating the assembly and neuronal surface expression of BK channels via its interaction with KCNT1. May also be involved in regulating anxiety-like behaviors via a BK channel-independent mechanism. Plays a negative role in TLR4 signaling by interacting with TRAF6 and ECSIT, leading to inhibition of ECSIT ubiquitination, an important step of the signaling. This chain is Protein cereblon (CRBN), found in Bos taurus (Bovine).